The sequence spans 254 residues: Cell division protein DivIB (254 aa).

The Cytoplasmic segment spans residues 1-21; the sequence is MPNAQIPVLKKNRTKKRTSRK. The chain crosses the membrane as a helical span at residues 22–42; it reads IAILLILLFIVLLAVLFFRSS. Over 43 to 254 the chain is Extracellular; the sequence is LSRVSEIRFD…EEGQEKDTTQ (212 aa). The POTRA domain occupies 44–112; that stretch reads SRVSEIRFDG…GIIAIHIKEF (69 aa).

The protein belongs to the FtsQ/DivIB family. DivIB subfamily.

It localises to the cell membrane. In terms of biological role, cell division protein that may be involved in stabilizing or promoting the assembly of the division complex. This chain is Cell division protein DivIB, found in Paenibacillus polymyxa (strain E681).